A 94-amino-acid polypeptide reads, in one-letter code: DNA-directed RNA polymerase subunit omega (94 aa).

Belongs to the RNA polymerase subunit omega family. In terms of assembly, the RNAP catalytic core consists of 2 alpha, 1 beta, 1 beta' and 1 omega subunit. When a sigma factor is associated with the core the holoenzyme is formed, which can initiate transcription.

It carries out the reaction RNA(n) + a ribonucleoside 5'-triphosphate = RNA(n+1) + diphosphate. In terms of biological role, promotes RNA polymerase assembly. Latches the N- and C-terminal regions of the beta' subunit thereby facilitating its interaction with the beta and alpha subunits. The sequence is that of DNA-directed RNA polymerase subunit omega from Parafrankia sp. (strain EAN1pec).